The primary structure comprises 382 residues: Mannitol-1-phosphate 5-dehydrogenase (382 aa).

3–14 (AVHFGAGNIGRG) is an NAD(+) binding site.

It belongs to the mannitol dehydrogenase family.

It carries out the reaction D-mannitol 1-phosphate + NAD(+) = beta-D-fructose 6-phosphate + NADH + H(+). The sequence is that of Mannitol-1-phosphate 5-dehydrogenase from Exiguobacterium sp. (strain ATCC BAA-1283 / AT1b).